We begin with the raw amino-acid sequence, 304 residues long: Retrotransposon Gag-like protein 4 (304 aa).

The CCHC-type zinc-finger motif lies at 276–293 (QLCVYCNQAGHFTRDCLA).

In adults, expressed in brain, eye, kidney, ovary and testis. Weakly expressed in thymus, heart and muscle.

Functionally, involved in cognitive function in the brain, possibly via the noradrenergic system. This Mus musculus (Mouse) protein is Retrotransposon Gag-like protein 4.